A 957-amino-acid polypeptide reads, in one-letter code: Glycine dehydrogenase (decarboxylating) (957 aa).

At lysine 708 the chain carries N6-(pyridoxal phosphate)lysine.

The protein belongs to the GcvP family. The glycine cleavage system is composed of four proteins: P, T, L and H. Pyridoxal 5'-phosphate is required as a cofactor.

The enzyme catalyses N(6)-[(R)-lipoyl]-L-lysyl-[glycine-cleavage complex H protein] + glycine + H(+) = N(6)-[(R)-S(8)-aminomethyldihydrolipoyl]-L-lysyl-[glycine-cleavage complex H protein] + CO2. Functionally, the glycine cleavage system catalyzes the degradation of glycine. The P protein binds the alpha-amino group of glycine through its pyridoxal phosphate cofactor; CO(2) is released and the remaining methylamine moiety is then transferred to the lipoamide cofactor of the H protein. The protein is Glycine dehydrogenase (decarboxylating) of Shigella flexneri.